A 177-amino-acid polypeptide reads, in one-letter code: Interleukin-7 (177 aa).

The signal sequence occupies residues M1–S25. 3 cysteine pairs are disulfide-bonded: C27-C166, C59-C154, and C72-C117. N-linked (GlcNAc...) asparagine glycans are attached at residues N95, N116, and N141.

The protein belongs to the IL-7/IL-9 family. As to quaternary structure, interacts with IL7R and CSF2RG.

It is found in the secreted. In terms of biological role, hematopoietic cytokine that plays an essential role in the development, expansion, and survival of naive and memory T-cells and B-cells thereby regulating the number of mature lymphocytes and maintaining lymphoid homeostasis. Mechanistically, exerts its biological effects through a receptor composed of IL7RA subunit and the cytokine receptor common subunit gamma/CSF2RG. Binding to the receptor leads to activation of various kinases including JAK1 or JAK3 depending on the cell type and subsequently propagation of signals through activation of several downstream signaling pathways including the PI3K/Akt/mTOR or the JAK-STAT5. In Homo sapiens (Human), this protein is Interleukin-7 (IL7).